Here is a 412-residue protein sequence, read N- to C-terminus: Homoserine dehydrogenase (412 aa).

Residues 9-16 (LGIGTVGG) and lysine 105 each bind NADP(+). Glutamate 190 lines the substrate pocket. Lysine 205 acts as the Proton donor in catalysis. Residues 330-407 (YLRLRAVDKP…ISGKVTRLRM (78 aa)) form the ACT domain.

This sequence belongs to the homoserine dehydrogenase family.

It carries out the reaction L-homoserine + NADP(+) = L-aspartate 4-semialdehyde + NADPH + H(+). The catalysed reaction is L-homoserine + NAD(+) = L-aspartate 4-semialdehyde + NADH + H(+). The protein operates within amino-acid biosynthesis; L-methionine biosynthesis via de novo pathway; L-homoserine from L-aspartate: step 3/3. It functions in the pathway amino-acid biosynthesis; L-threonine biosynthesis; L-threonine from L-aspartate: step 3/5. This is Homoserine dehydrogenase (hom) from Methylobacillus glycogenes.